A 91-amino-acid chain; its full sequence is Elongation factor 1-beta (91 aa).

This sequence belongs to the EF-1-beta/EF-1-delta family.

Its function is as follows. Promotes the exchange of GDP for GTP in EF-1-alpha/GDP, thus allowing the regeneration of EF-1-alpha/GTP that could then be used to form the ternary complex EF-1-alpha/GTP/AAtRNA. The chain is Elongation factor 1-beta (ef1b) from Pyrococcus horikoshii (strain ATCC 700860 / DSM 12428 / JCM 9974 / NBRC 100139 / OT-3).